Reading from the N-terminus, the 98-residue chain is Protein S100-A11 (98 aa).

A Phosphothreonine modification is found at Thr5. EF-hand domains follow at residues Cys8–Ala44 and Lys50–Ala85. N6-acetyllysine is present on Lys22. Residues Asn26, Gln28, Glu33, Asp63, Asn65, Asp67, Gln69, and Glu74 each contribute to the Ca(2+) site.

This sequence belongs to the S-100 family. Homodimer; disulfide-linked. Post-translationally, phosphorylation at Thr-5 significantly suppresses homodimerization and promotes association with NCL/nucleolin which induces nuclear translocation.

The protein resides in the cytoplasm. Its subcellular location is the nucleus. Functionally, facilitates the differentiation and the cornification of keratinocytes. This chain is Protein S100-A11 (S100a11), found in Mus musculus (Mouse).